The primary structure comprises 366 residues: Beta sliding clamp (366 aa).

The protein belongs to the beta sliding clamp family. In terms of assembly, forms a ring-shaped head-to-tail homodimer around DNA which binds and tethers DNA polymerases and other proteins to the DNA. The DNA replisome complex has a single clamp-loading complex (3 tau and 1 each of delta, delta', psi and chi subunits) which binds 3 Pol III cores (1 core on the leading strand and 2 on the lagging strand) each with a beta sliding clamp dimer. Additional proteins in the replisome are other copies of gamma, psi and chi, Ssb, DNA helicase and RNA primase.

It is found in the cytoplasm. In terms of biological role, confers DNA tethering and processivity to DNA polymerases and other proteins. Acts as a clamp, forming a ring around DNA (a reaction catalyzed by the clamp-loading complex) which diffuses in an ATP-independent manner freely and bidirectionally along dsDNA. Initially characterized for its ability to contact the catalytic subunit of DNA polymerase III (Pol III), a complex, multichain enzyme responsible for most of the replicative synthesis in bacteria; Pol III exhibits 3'-5' exonuclease proofreading activity. The beta chain is required for initiation of replication as well as for processivity of DNA replication. This is Beta sliding clamp (dnaN) from Haemophilus influenzae (strain ATCC 51907 / DSM 11121 / KW20 / Rd).